We begin with the raw amino-acid sequence, 163 residues long: NADH-quinone oxidoreductase subunit I (163 aa).

4Fe-4S ferredoxin-type domains lie at 53–83 and 94–123; these read LRRY…IEAG and VRYD…EGPN. [4Fe-4S] cluster contacts are provided by Cys63, Cys66, Cys69, Cys73, Cys103, Cys106, Cys109, and Cys113.

Belongs to the complex I 23 kDa subunit family. As to quaternary structure, NDH-1 is composed of 14 different subunits. Subunits NuoA, H, J, K, L, M, N constitute the membrane sector of the complex. It depends on [4Fe-4S] cluster as a cofactor.

The protein localises to the cell inner membrane. It carries out the reaction a quinone + NADH + 5 H(+)(in) = a quinol + NAD(+) + 4 H(+)(out). Functionally, NDH-1 shuttles electrons from NADH, via FMN and iron-sulfur (Fe-S) centers, to quinones in the respiratory chain. The immediate electron acceptor for the enzyme in this species is believed to be ubiquinone. Couples the redox reaction to proton translocation (for every two electrons transferred, four hydrogen ions are translocated across the cytoplasmic membrane), and thus conserves the redox energy in a proton gradient. This chain is NADH-quinone oxidoreductase subunit I, found in Brucella canis (strain ATCC 23365 / NCTC 10854 / RM-666).